Here is a 1209-residue protein sequence, read N- to C-terminus: Sterol 3-beta-glucosyltransferase (1209 aa).

The GRAM 1 domain occupies 167–217; the sequence is ERLIKKFLPNDDEKYIEEYPCWLLRDIMIQGHAYLTNKHLFFFAFIPNFES. The PH domain maps to 218 to 315; it reads DFNVTGSLRL…WVSSIKKQMF (98 aa). Residues 568-634 form the GRAM 2 domain; that stretch reads VRFRQHFSFD…EDVENCYKET (67 aa). S745, R746, D748, N1019, V1048, H1050, H1063, S1066, G1067, T1068, D1087, and Q1088 together coordinate UDP-alpha-D-glucose. A disordered region spans residues 1186–1209; sequence AKGNEKEEYSSEGSGSNDGSWLLI. Residues 1196-1209 are compositionally biased toward low complexity; it reads SEGSGSNDGSWLLI.

Belongs to the glycosyltransferase 28 family.

It is found in the cytoplasm. The protein localises to the membrane. It carries out the reaction a sterol + UDP-alpha-D-glucose = a sterol 3-beta-D-glucoside + UDP + H(+). The catalysed reaction is ergosterol + UDP-alpha-D-glucose = ergosteryl 3-beta-D-glucoside + UDP + H(+). Functionally, sterol glycosyltransferase responsible for the glycosylation of ergosterol to form ergosterol-glucoside. This chain is Sterol 3-beta-glucosyltransferase, found in Kluyveromyces lactis (strain ATCC 8585 / CBS 2359 / DSM 70799 / NBRC 1267 / NRRL Y-1140 / WM37) (Yeast).